Reading from the N-terminus, the 23-residue chain is Basic phospholipase A2 CB1 (23 aa).

In terms of assembly, heterodimer of an acidic subunit and a basic chain. The acidic subunit is non-toxic, without enzymatic activity and comprises 3 peptides that are cross-linked by 7 disulfide bridges. The basic subunit is toxic, has phospholipase A2 activity and is composed of a single chain. Ca(2+) serves as cofactor. In terms of processing, contains 7 disulfide bonds. In terms of tissue distribution, expressed by the venom gland.

It localises to the secreted. The enzyme catalyses a 1,2-diacyl-sn-glycero-3-phosphocholine + H2O = a 1-acyl-sn-glycero-3-phosphocholine + a fatty acid + H(+). In terms of biological role, snake venom phospholipase A2 (PLA2) that shows presynaptic neurotoxicity. PLA2 catalyzes the calcium-dependent hydrolysis of the 2-acyl groups in 3-sn-phosphoglycerides. This chain is Basic phospholipase A2 CB1, found in Crotalus basiliscus (Mexican west-coast rattlesnake).